A 421-amino-acid chain; its full sequence is Putative nickel insertion protein (421 aa).

The protein belongs to the LarC family.

In Gloeobacter violaceus (strain ATCC 29082 / PCC 7421), this protein is Putative nickel insertion protein.